Consider the following 455-residue polypeptide: Ribulose bisphosphate carboxylase large chain (455 aa).

Lys5 bears the N6,N6,N6-trimethyllysine mark. Substrate-binding residues include Asn114 and Thr164. The Proton acceptor role is filled by Lys166. Lys168 provides a ligand contact to substrate. Mg(2+)-binding residues include Lys192, Asp194, and Glu195. Lys192 carries the post-translational modification N6-carboxylysine. Catalysis depends on His285, which acts as the Proton acceptor. Residues Arg286, His318, and Ser370 each contribute to the substrate site.

This sequence belongs to the RuBisCO large chain family. Type I subfamily. In terms of assembly, heterohexadecamer of 8 large chains and 8 small chains; disulfide-linked. The disulfide link is formed within the large subunit homodimers. Mg(2+) is required as a cofactor. The disulfide bond which can form in the large chain dimeric partners within the hexadecamer appears to be associated with oxidative stress and protein turnover.

It is found in the plastid. The protein localises to the chloroplast. It carries out the reaction 2 (2R)-3-phosphoglycerate + 2 H(+) = D-ribulose 1,5-bisphosphate + CO2 + H2O. The enzyme catalyses D-ribulose 1,5-bisphosphate + O2 = 2-phosphoglycolate + (2R)-3-phosphoglycerate + 2 H(+). In terms of biological role, ruBisCO catalyzes two reactions: the carboxylation of D-ribulose 1,5-bisphosphate, the primary event in carbon dioxide fixation, as well as the oxidative fragmentation of the pentose substrate in the photorespiration process. Both reactions occur simultaneously and in competition at the same active site. The chain is Ribulose bisphosphate carboxylase large chain from Erythrina crista-galli (Cockspur coral tree).